The following is an 82-amino-acid chain: Small ribosomal subunit protein uS15 (82 aa).

The protein belongs to the universal ribosomal protein uS15 family. In terms of assembly, part of the 30S ribosomal subunit. Forms a bridge to the 50S subunit in the 70S ribosome, contacting the 23S rRNA.

Its function is as follows. One of the primary rRNA binding proteins, it binds directly to 16S rRNA where it helps nucleate assembly of the platform of the 30S subunit by binding and bridging several RNA helices of the 16S rRNA. Functionally, forms an intersubunit bridge (bridge B4) with the 23S rRNA of the 50S subunit in the ribosome. The chain is Small ribosomal subunit protein uS15 from Pelagibacter ubique (strain HTCC1062).